Here is a 287-residue protein sequence, read N- to C-terminus: UPF0276 protein ACIAD0933 (287 aa).

It belongs to the UPF0276 family.

The sequence is that of UPF0276 protein ACIAD0933 from Acinetobacter baylyi (strain ATCC 33305 / BD413 / ADP1).